Reading from the N-terminus, the 378-residue chain is Chaperone protein DnaJ (378 aa).

The J domain occupies 5–70 (DYYQILGIPK…EKRTAYDQYG (66 aa)). A CR-type zinc finger spans residues 133–211 (GTTKEIRIPT…CRGQGRIKTN (79 aa)). The Zn(2+) site is built by C146, C149, C163, C166, C185, C188, C199, and C202. CXXCXGXG motif repeat units follow at residues 146–153 (CKTCYGMG), 163–170 (CSTCHGKG), 185–192 (CPTCNGIG), and 199–206 (CRMCRGQG).

It belongs to the DnaJ family. Homodimer. Zn(2+) serves as cofactor.

It localises to the cytoplasm. Its function is as follows. Participates actively in the response to hyperosmotic and heat shock by preventing the aggregation of stress-denatured proteins and by disaggregating proteins, also in an autonomous, DnaK-independent fashion. Unfolded proteins bind initially to DnaJ; upon interaction with the DnaJ-bound protein, DnaK hydrolyzes its bound ATP, resulting in the formation of a stable complex. GrpE releases ADP from DnaK; ATP binding to DnaK triggers the release of the substrate protein, thus completing the reaction cycle. Several rounds of ATP-dependent interactions between DnaJ, DnaK and GrpE are required for fully efficient folding. Also involved, together with DnaK and GrpE, in the DNA replication of plasmids through activation of initiation proteins. The protein is Chaperone protein DnaJ of Buchnera aphidicola subsp. Schizaphis graminum (strain Sg).